Consider the following 342-residue polypeptide: Ketol-acid reductoisomerase (NADP(+)) (342 aa).

The KARI N-terminal Rossmann domain occupies 2 to 182; sequence AEMFYDDDAD…GGLRAGGIKT (181 aa). NADP(+) contacts are provided by residues 25–28, Lys-48, Ser-51, Ser-53, and 83–86; these read FGSQ and DHLQ. His-108 is an active-site residue. Gly-134 is a binding site for NADP(+). The 146-residue stretch at 183–328 folds into the KARI C-terminal knotted domain; it reads TFTEETETDL…RELRKLMAWV (146 aa). Mg(2+) is bound by residues Asp-191, Glu-195, Glu-227, and Glu-231. Position 252 (Ser-252) interacts with substrate.

This sequence belongs to the ketol-acid reductoisomerase family. The cofactor is Mg(2+).

The enzyme catalyses (2R)-2,3-dihydroxy-3-methylbutanoate + NADP(+) = (2S)-2-acetolactate + NADPH + H(+). It catalyses the reaction (2R,3R)-2,3-dihydroxy-3-methylpentanoate + NADP(+) = (S)-2-ethyl-2-hydroxy-3-oxobutanoate + NADPH + H(+). It functions in the pathway amino-acid biosynthesis; L-isoleucine biosynthesis; L-isoleucine from 2-oxobutanoate: step 2/4. Its pathway is amino-acid biosynthesis; L-valine biosynthesis; L-valine from pyruvate: step 2/4. Involved in the biosynthesis of branched-chain amino acids (BCAA). Catalyzes an alkyl-migration followed by a ketol-acid reduction of (S)-2-acetolactate (S2AL) to yield (R)-2,3-dihydroxy-isovalerate. In the isomerase reaction, S2AL is rearranged via a Mg-dependent methyl migration to produce 3-hydroxy-3-methyl-2-ketobutyrate (HMKB). In the reductase reaction, this 2-ketoacid undergoes a metal-dependent reduction by NADPH to yield (R)-2,3-dihydroxy-isovalerate. In Kineococcus radiotolerans (strain ATCC BAA-149 / DSM 14245 / SRS30216), this protein is Ketol-acid reductoisomerase (NADP(+)).